A 595-amino-acid chain; its full sequence is Protein alan shepard (595 aa).

The segment covering 1–12 has biased composition (pro residues); the sequence is MHPRYSPAPPPH. Residues 1 to 82 are disordered; sequence MHPRYSPAPP…ASVAAAPPTP (82 aa). Tyr-5 bears the Phosphotyrosine mark. The span at 13 to 31 shows a compositional bias: low complexity; the sequence is QQQQQQQQQPMGGPHQQQS. Over residues 32 to 43 the composition is skewed to gly residues; sequence AGGGPGHGGGAS. The span at 50–68 shows a compositional bias: polar residues; that stretch reads PNSQQLPPQMPRSQNYANG. The segment covering 69 to 78 has biased composition (low complexity); the sequence is SSSAASVAAA. Phosphotyrosine occurs at positions 138 and 154. Positions 184–238 are disordered; sequence RVPTAASPSNTNSSSSSNTGSQSGTLSTSLSNTTNTNTTMGPNGTAQNQNQQGGE. Residues 190 to 238 are compositionally biased toward low complexity; the sequence is SPSNTNSSSSSNTGSQSGTLSTSLSNTTNTNTTMGPNGTAQNQNQQGGE. 2 consecutive RRM domains span residues 243-316 and 322-401; these read TNLY…MAKQ and TNLY…FADG. The segment at 569 to 595 is disordered; the sequence is MTDSEQASTAASPDEAYTQYPHQAAPK.

Has a role in the perception of gravity. The protein is Protein alan shepard of Drosophila virilis (Fruit fly).